The chain runs to 562 residues: MNERQQVASALQKVLPNLSVEDLEAKLERPKDAKNGDYAFPTFFLAKELHRAPQVIASELAEQIDQSGFERVVVAGPYINFFLDKASVGGEILAAVLADPANYGSTDLGHQGHVTIDLSSPNIAKPMGMGHLRSTVIGNAIANILAKVNYVPVRINHLGDWGTQFGKLMAAYEMWGDEAEVQKDPINTLQKYYVKINTEADEHPEYDDLGREWFAKLEQGDPEAQRLWKWFREVSLQRFMKIYNLLDIDFDSFNGEAFYNDKMDEVVTLLEDKQLLKESRGAEIIDLEKYDLNPAMIRKSDGSTLYLTRDLAAALFRKRMYHHAQSLYVVGAEQSNHFAQLKAVLSEMGFTWSDQIHHIPFGLMSLNGKKMSTRKGNIIQLEDVLNDSIKLARQQIEEKNPTLANADQVAEEVGVGAVIFHDLKNERTNSVDFKLEEVVKFEGETGPYVQYAHARAESILRKAGRPSFEGATLTVDGQEAWEVAKKIGQYQETIVRAANEYDPSLIGKYALSLAKSFNQYYAHTRILEEDDQKLSRLALVQAVSDVLKSALALLGVKAPDEM.

A 'HIGH' region motif is present at residues 121–131 (PNIAKPMGMGH).

Belongs to the class-I aminoacyl-tRNA synthetase family. Monomer.

The protein localises to the cytoplasm. It catalyses the reaction tRNA(Arg) + L-arginine + ATP = L-arginyl-tRNA(Arg) + AMP + diphosphate. The chain is Arginine--tRNA ligase from Limosilactobacillus fermentum (strain NBRC 3956 / LMG 18251) (Lactobacillus fermentum).